The primary structure comprises 128 residues: Claw keratin (128 aa).

Repeat copies occupy residues 83–91 (GGYGGLGGY) and 92–100 (GGYGGLGGY). The interval 83–104 (GGYGGLGGYGGYGGLGGYGGYG) is 3 X 9 AA tandem repeats, Gly-rich. The 3; approximate repeat unit spans residues 101 to 109 (GGYGGFGSC).

The protein belongs to the avian keratin family. In terms of tissue distribution, abundantly expressed in the claw and at a low level in feather tissue.

This chain is Claw keratin (CKER1), found in Gallus gallus (Chicken).